The following is a 385-amino-acid chain: Putative transport protein MT1133 (385 aa).

Transmembrane regions (helical) follow at residues 7–27 (LTQK…GAYF), 32–52 (FVLI…FKWF), 66–86 (LLSA…LAIV), 159–179 (SLAG…ALLV), 218–238 (FVIA…AGFH), 241–261 (FFIF…GGIV), 263–283 (IPFG…FVLL), and 319–339 (GITM…ILIV).

Belongs to the autoinducer-2 exporter (AI-2E) (TC 2.A.86) family.

Its subcellular location is the cell membrane. In Mycobacterium tuberculosis (strain CDC 1551 / Oshkosh), this protein is Putative transport protein MT1133.